The primary structure comprises 164 residues: Coenzyme Q-binding protein coq10, mitochondrial (164 aa).

This sequence belongs to the COQ10 family. Interacts with coenzyme Q.

The protein localises to the mitochondrion inner membrane. In terms of biological role, required for the function of coenzyme Q in the respiratory chain. May serve as a chaperone or may be involved in the transport of Q6 from its site of synthesis to the catalytic sites of the respiratory complexes. This is Coenzyme Q-binding protein coq10, mitochondrial from Schizosaccharomyces pombe (strain 972 / ATCC 24843) (Fission yeast).